The following is a 334-amino-acid chain: Formylmethanofuran--tetrahydromethanopterin formyltransferase (334 aa).

It belongs to the FTR family. In terms of assembly, homotetramer.

The protein localises to the cytoplasm. It catalyses the reaction N-formylmethanofuran + 5,6,7,8-tetrahydromethanopterin + H(+) = N(5)-formyl-5,6,7,8-tetrahydromethanopterin + methanofuran. The protein operates within one-carbon metabolism; formaldehyde degradation; formate from formaldehyde (H(4)MPT route): step 4/5. Catalyzes the transfer of a formyl group from 5-formyl tetrahydromethanopterin (5-formyl-H(4)MPT) to methanofuran (MFR) to produce formylmethanofuran (formyl-MFR) and tetrahydromethanopterin (H(4)MPT). In Rhodopirellula baltica (strain DSM 10527 / NCIMB 13988 / SH1), this protein is Formylmethanofuran--tetrahydromethanopterin formyltransferase.